We begin with the raw amino-acid sequence, 127 residues long: Large ribosomal subunit protein bL20 (127 aa).

It belongs to the bacterial ribosomal protein bL20 family.

In terms of biological role, binds directly to 23S ribosomal RNA and is necessary for the in vitro assembly process of the 50S ribosomal subunit. It is not involved in the protein synthesizing functions of that subunit. This Corynebacterium jeikeium (strain K411) protein is Large ribosomal subunit protein bL20.